Consider the following 54-residue polypeptide: Ribulose bisphosphate carboxylase large chain (54 aa).

A propeptide spanning residues Met1–Ser2 is cleaved from the precursor. An N-acetylproline modification is found at Pro3. Position 14 is an N6,N6,N6-trimethyllysine (Lys14).

The protein belongs to the RuBisCO large chain family. Type I subfamily. Heterohexadecamer of 8 large chains and 8 small chains.

The protein localises to the plastid. Its subcellular location is the chloroplast. It catalyses the reaction 2 (2R)-3-phosphoglycerate + 2 H(+) = D-ribulose 1,5-bisphosphate + CO2 + H2O. The catalysed reaction is D-ribulose 1,5-bisphosphate + O2 = 2-phosphoglycolate + (2R)-3-phosphoglycerate + 2 H(+). Its function is as follows. RuBisCO catalyzes two reactions: the carboxylation of D-ribulose 1,5-bisphosphate, the primary event in carbon dioxide fixation, as well as the oxidative fragmentation of the pentose substrate in the photorespiration process. Both reactions occur simultaneously and in competition at the same active site. The protein is Ribulose bisphosphate carboxylase large chain (rbcL) of Magnolia liliiflora (Mulan magnolia).